Here is a 1059-residue protein sequence, read N- to C-terminus: Carbamoyl phosphate synthase large chain (1059 aa).

Residues 1–401 form a carboxyphosphate synthetic domain region; sequence MPKRKDIQKV…AMLKAVRSLE (401 aa). Residues Arg-129, Arg-169, Gly-175, Gly-176, Arg-208, Ile-210, Glu-215, Gly-241, Val-242, His-243, Gln-284, and Glu-298 each contribute to the ATP site. In terms of domain architecture, ATP-grasp 1 spans 133-327; the sequence is KALMERLNEP…IAKMAAKIAV (195 aa). Residues Gln-284, Glu-298, and Asn-300 each contribute to the Mg(2+) site. Gln-284, Glu-298, and Asn-300 together coordinate Mn(2+). The segment at 402–546 is oligomerization domain; it reads IGVTGLNDLT…YATYERENES (145 aa). The interval 547–929 is carbamoyl phosphate synthetic domain; the sequence is VRSKKPSVIV…ALYKAFVASN (383 aa). The region spanning 671 to 861 is the ATP-grasp 2 domain; sequence DQVIKTLALP…LAQLATRVML (191 aa). ATP contacts are provided by Arg-707, Ser-746, Leu-748, Glu-752, Gly-777, Val-778, His-779, Ser-780, Gln-820, and Glu-832. 3 residues coordinate Mg(2+): Gln-820, Glu-832, and Asn-834. Gln-820, Glu-832, and Asn-834 together coordinate Mn(2+). In terms of domain architecture, MGS-like spans 930–1059; sequence IKVPQYGNVL…SRSFTVNEMK (130 aa). The tract at residues 930–1059 is allosteric domain; that stretch reads IKVPQYGNVL…SRSFTVNEMK (130 aa).

This sequence belongs to the CarB family. In terms of assembly, composed of two chains; the small (or glutamine) chain promotes the hydrolysis of glutamine to ammonia, which is used by the large (or ammonia) chain to synthesize carbamoyl phosphate. Tetramer of heterodimers (alpha,beta)4. It depends on Mg(2+) as a cofactor. The cofactor is Mn(2+).

The catalysed reaction is hydrogencarbonate + L-glutamine + 2 ATP + H2O = carbamoyl phosphate + L-glutamate + 2 ADP + phosphate + 2 H(+). It carries out the reaction hydrogencarbonate + NH4(+) + 2 ATP = carbamoyl phosphate + 2 ADP + phosphate + 2 H(+). Its pathway is amino-acid biosynthesis; L-arginine biosynthesis; carbamoyl phosphate from bicarbonate: step 1/1. The protein operates within pyrimidine metabolism; UMP biosynthesis via de novo pathway; (S)-dihydroorotate from bicarbonate: step 1/3. Its function is as follows. Large subunit of the glutamine-dependent carbamoyl phosphate synthetase (CPSase). CPSase catalyzes the formation of carbamoyl phosphate from the ammonia moiety of glutamine, carbonate, and phosphate donated by ATP, constituting the first step of 2 biosynthetic pathways, one leading to arginine and/or urea and the other to pyrimidine nucleotides. The large subunit (synthetase) binds the substrates ammonia (free or transferred from glutamine from the small subunit), hydrogencarbonate and ATP and carries out an ATP-coupled ligase reaction, activating hydrogencarbonate by forming carboxy phosphate which reacts with ammonia to form carbamoyl phosphate. This chain is Carbamoyl phosphate synthase large chain, found in Leuconostoc citreum (strain KM20).